The primary structure comprises 796 residues: Endonuclease MutS2 (796 aa).

Residue 339-346 (GPNTGGKT) coordinates ATP. The disordered stretch occupies residues 620 to 644 (EKLGDTDSSLVSKAKKNRKQHKPSD). Residues 721 to 796 (LNIIGKRVDE…DHGVTIVEFK (76 aa)) form the Smr domain.

Belongs to the DNA mismatch repair MutS family. MutS2 subfamily. In terms of assembly, homodimer. Binds to stalled ribosomes, contacting rRNA.

Its function is as follows. Endonuclease that is involved in the suppression of homologous recombination and thus may have a key role in the control of bacterial genetic diversity. In terms of biological role, acts as a ribosome collision sensor, splitting the ribosome into its 2 subunits. Detects stalled/collided 70S ribosomes which it binds and splits by an ATP-hydrolysis driven conformational change. Acts upstream of the ribosome quality control system (RQC), a ribosome-associated complex that mediates the extraction of incompletely synthesized nascent chains from stalled ribosomes and their subsequent degradation. Probably generates substrates for RQC. This Lachnoclostridium phytofermentans (strain ATCC 700394 / DSM 18823 / ISDg) (Clostridium phytofermentans) protein is Endonuclease MutS2.